The following is a 942-amino-acid chain: UvrABC system protein A (942 aa).

32 to 39 is an ATP binding site; the sequence is GLSGSGKS. The C4-type zinc finger occupies 251–278; sequence CPVCGFTVPELEPRLFSFNAPFGSCPTC. ABC transporter domains lie at 308 to 589 and 609 to 937; these read WNPI…KKSI and GNGR…HYLK. 641 to 648 contributes to the ATP binding site; the sequence is GVSGSGKS. Residues 740 to 766 form a C4-type zinc finger; that stretch reads CEACSGDGIIKIEMHFLPDVYVPCEVC.

It belongs to the ABC transporter superfamily. UvrA family. As to quaternary structure, forms a heterotetramer with UvrB during the search for lesions.

The protein resides in the cytoplasm. In terms of biological role, the UvrABC repair system catalyzes the recognition and processing of DNA lesions. UvrA is an ATPase and a DNA-binding protein. A damage recognition complex composed of 2 UvrA and 2 UvrB subunits scans DNA for abnormalities. When the presence of a lesion has been verified by UvrB, the UvrA molecules dissociate. The chain is UvrABC system protein A from Streptococcus pyogenes serotype M18 (strain MGAS8232).